Here is a 433-residue protein sequence, read N- to C-terminus: Oxysterol-binding protein-like protein OBPa (433 aa).

This sequence belongs to the OSBP family.

The polypeptide is Oxysterol-binding protein-like protein OBPa (OBPA) (Candida albicans (strain SC5314 / ATCC MYA-2876) (Yeast)).